We begin with the raw amino-acid sequence, 943 residues long: Zinc finger BED domain-containing protein 39 (943 aa).

The tract at residues methionine 1 to threonine 99 is disordered. The segment covering proline 12–valine 21 has biased composition (basic and acidic residues). Residues serine 50 to serine 72 show a composition bias toward low complexity. Residues proline 73–glutamine 85 show a composition bias toward basic and acidic residues. Residues asparagine 184–phenylalanine 235 form a BED-type; degenerate zinc finger. 2 disordered regions span residues tyrosine 242–serine 315 and arginine 328–proline 348. Over residues threonine 262–alanine 276 the composition is skewed to polar residues. Residues serine 277 to glycine 292 show a composition bias toward low complexity. The segment covering arginine 328–proline 338 has biased composition (polar residues).

As to expression, expressed in distal tip cells and in germline cells.

It localises to the nucleus. Its subcellular location is the cytoplasm. Its function is as follows. Regulates the timing and orientation of distal tip cell migration during gonadal development. May act in parallel to cacn-1 and Rac GTPases to control the anterior and posterior migration of distal tip cells. This is Zinc finger BED domain-containing protein 39 from Caenorhabditis elegans.